Reading from the N-terminus, the 165-residue chain is Nucleotide-binding protein NATL1_05371 (165 aa).

It belongs to the YajQ family.

Functionally, nucleotide-binding protein. The protein is Nucleotide-binding protein NATL1_05371 of Prochlorococcus marinus (strain NATL1A).